A 68-amino-acid chain; its full sequence is Amphipathic peptide CT1 (68 aa).

Residues 1–23 (MKTQIVILIVAVLFLQLVSQSDA) form the signal peptide. A Leucine amide modification is found at Leu36. A propeptide spanning residues 40 to 68 (GLKNLDQYNDLFDGEISDADIKFLKDLMR) is cleaved from the precursor.

This sequence belongs to the non-disulfide-bridged peptide (NDBP) superfamily. Short antimicrobial peptide (group 4) family. Expressed by the venom gland.

The protein resides in the secreted. It localises to the target cell membrane. Functionally, amphipathic peptide that shows no antibacterial activity even at 50 uM but shows a low hemolytic activity against human erythrocytes. The protein is Amphipathic peptide CT1 of Mesomexovis subcristatus (Scorpion).